Reading from the N-terminus, the 231-residue chain is MTLPLVEARSLSKSFGEGELASQVLKRLSFDINAGERVALVGPSGSGKSTLLAVLGTLLGATSGDLRILGQPMIGLPEAELARFRNRNLGFVFQFHHLLPDFTALENVLFPAAAGKGRETRLMRERARALLVRVGLEDRVDYGARKLSGGQKQRVALARALINRPALVLADEPTGNLDSGPAEQVMNLLGEINAEDGTTFLISTHDAAVAARCTRRMELLDGRLVGQDPAD.

The ABC transporter domain maps to Val6–Ala230. Gly42–Ser49 contributes to the ATP binding site.

Belongs to the ABC transporter superfamily. Lipoprotein translocase (TC 3.A.1.125) family. As to quaternary structure, the complex is composed of two ATP-binding proteins (LolD) and two transmembrane proteins (LolC and LolE).

Its subcellular location is the cell inner membrane. In terms of biological role, part of the ABC transporter complex LolCDE involved in the translocation of mature outer membrane-directed lipoproteins, from the inner membrane to the periplasmic chaperone, LolA. Responsible for the formation of the LolA-lipoprotein complex in an ATP-dependent manner. The protein is Lipoprotein-releasing system ATP-binding protein LolD 2 of Rhodospirillum rubrum (strain ATCC 11170 / ATH 1.1.1 / DSM 467 / LMG 4362 / NCIMB 8255 / S1).